The sequence spans 84 residues: MAFGKKPAQNPLFKRKRYCRFTVAGVEQIDYKDVDTLKGFIGENAKITPARLTGTKAKYQRQLDTAIKRARYLALLPFSDQHKK.

This sequence belongs to the bacterial ribosomal protein bS18 family. Part of the 30S ribosomal subunit. Forms a tight heterodimer with protein bS6.

In terms of biological role, binds as a heterodimer with protein bS6 to the central domain of the 16S rRNA, where it helps stabilize the platform of the 30S subunit. The protein is Small ribosomal subunit protein bS18 of Polynucleobacter necessarius subsp. necessarius (strain STIR1).